The primary structure comprises 206 residues: N-(5'-phosphoribosyl)anthranilate isomerase (206 aa).

Belongs to the TrpF family.

The enzyme catalyses N-(5-phospho-beta-D-ribosyl)anthranilate = 1-(2-carboxyphenylamino)-1-deoxy-D-ribulose 5-phosphate. The protein operates within amino-acid biosynthesis; L-tryptophan biosynthesis; L-tryptophan from chorismate: step 3/5. This chain is N-(5'-phosphoribosyl)anthranilate isomerase, found in Pseudomonas syringae pv. syringae (strain B728a).